A 625-amino-acid polypeptide reads, in one-letter code: Interferon-induced GTP-binding protein MxE (625 aa).

The Dynamin-type G domain maps to 40 to 313 (DLNLPAIAVI…LVEHIAKNLP (274 aa)). The tract at residues 50-57 (GDQSSGKS) is G1 motif. Position 50 to 57 (50 to 57 (GDQSSGKS)) interacts with GTP. Positions 75 to 77 (VTR) are G2 motif. The interval 151–154 (DLPG) is G3 motif. GTP is bound by residues 151-155 (DLPGI) and 220-223 (TKPD). A G4 motif region spans residues 220-223 (TKPD). Residues 252–255 (KCRG) form a G5 motif region. The 90-residue stretch at 536–625 (VREMAYHLTS…RVLSKFVHSA (90 aa)) folds into the GED domain.

Belongs to the TRAFAC class dynamin-like GTPase superfamily. Dynamin/Fzo/YdjA family.

Its subcellular location is the cytoplasm. This is Interferon-induced GTP-binding protein MxE (mxe) from Danio rerio (Zebrafish).